The primary structure comprises 263 residues: tRNA1(Val) (adenine(37)-N6)-methyltransferase (263 aa).

It belongs to the methyltransferase superfamily. tRNA (adenine-N(6)-)-methyltransferase family.

The protein localises to the cytoplasm. The catalysed reaction is adenosine(37) in tRNA1(Val) + S-adenosyl-L-methionine = N(6)-methyladenosine(37) in tRNA1(Val) + S-adenosyl-L-homocysteine + H(+). Specifically methylates the adenine in position 37 of tRNA(1)(Val) (anticodon cmo5UAC). In Pseudoalteromonas atlantica (strain T6c / ATCC BAA-1087), this protein is tRNA1(Val) (adenine(37)-N6)-methyltransferase.